The chain runs to 358 residues: Ion-translocating oxidoreductase complex subunit D (358 aa).

3 consecutive transmembrane segments (helical) span residues 24 to 44 (ILAMMPAFFTQIYYFGFGVVL), 79 to 99 (LTALILAMAIPPYAPYWIIII), and 125 to 145 (IGYVILLISFPLQMTTWMPPI). The residue at position 186 (threonine 186) is an FMN phosphoryl threonine. Helical transmembrane passes span 220-240 (FAQGWWQINVAFLAGGIFLIL), 248-268 (IPVAMLVTFFCLATATAFTGF), 271-291 (LSAISQLVSGAMMFGAFFIAT), 297-317 (SITPRGKIIFGALVGLFVYLI), and 321-341 (GNYPDGVAFAILLSNICVPLI).

The protein belongs to the NqrB/RnfD family. The complex is composed of six subunits: RnfA, RnfB, RnfC, RnfD, RnfE and RnfG. FMN serves as cofactor.

The protein localises to the cell inner membrane. Functionally, part of a membrane-bound complex that couples electron transfer with translocation of ions across the membrane. The sequence is that of Ion-translocating oxidoreductase complex subunit D from Haemophilus influenzae (strain ATCC 51907 / DSM 11121 / KW20 / Rd).